The following is a 347-amino-acid chain: MRILGIETSCDETGVAIYDEEKGLVANQLYSQIEMHADYGGVVPELASRDHIRKTLPLIQEALKEANLTAADIDGVVYTAGPGLVGALLVGSTIARSLAYAWNVPALGVHHMEGHLMAPMLEDNPPAFPFVALLISGGHTQLVKVEGVGQYEILGESIDDAAGEAFDKTGKLLGLDYPAGVAVSQLAEKGTPNRFVFPRPMTDRPGLDFSFSGLKTFAANTINANLDENGRLDEQTRCDIAHAFQQAVVDTIIIKCKRALQQTGYKRLVMAGGVSANKQLRTDLAEMMKNLKGEVYYPRPQFCTDNGAMIAYTGFLRLKNGETSDLSISVKPRWNMTELPDISTTGG.

Residues His111 and His115 each contribute to the Fe cation site. Substrate-binding positions include 134–138 (LISGG), Asp167, Gly180, and Asn277. Residue Asp305 coordinates Fe cation.

This sequence belongs to the KAE1 / TsaD family. It depends on Fe(2+) as a cofactor.

It is found in the cytoplasm. The catalysed reaction is L-threonylcarbamoyladenylate + adenosine(37) in tRNA = N(6)-L-threonylcarbamoyladenosine(37) in tRNA + AMP + H(+). Its function is as follows. Required for the formation of a threonylcarbamoyl group on adenosine at position 37 (t(6)A37) in tRNAs that read codons beginning with adenine. Is involved in the transfer of the threonylcarbamoyl moiety of threonylcarbamoyl-AMP (TC-AMP) to the N6 group of A37, together with TsaE and TsaB. TsaD likely plays a direct catalytic role in this reaction. The polypeptide is tRNA N6-adenosine threonylcarbamoyltransferase (Actinobacillus pleuropneumoniae serotype 5b (strain L20)).